Reading from the N-terminus, the 357-residue chain is UDP-N-acetylglucosamine--N-acetylmuramyl-(pentapeptide) pyrophosphoryl-undecaprenol N-acetylglucosamine transferase (357 aa).

UDP-N-acetyl-alpha-D-glucosamine-binding positions include 12-14, asparagine 124, arginine 162, serine 190, isoleucine 244, 263-268, and glutamine 289; these read TGG and ALTVAE.

Belongs to the glycosyltransferase 28 family. MurG subfamily.

It localises to the cell inner membrane. The enzyme catalyses di-trans,octa-cis-undecaprenyl diphospho-N-acetyl-alpha-D-muramoyl-L-alanyl-D-glutamyl-meso-2,6-diaminopimeloyl-D-alanyl-D-alanine + UDP-N-acetyl-alpha-D-glucosamine = di-trans,octa-cis-undecaprenyl diphospho-[N-acetyl-alpha-D-glucosaminyl-(1-&gt;4)]-N-acetyl-alpha-D-muramoyl-L-alanyl-D-glutamyl-meso-2,6-diaminopimeloyl-D-alanyl-D-alanine + UDP + H(+). It functions in the pathway cell wall biogenesis; peptidoglycan biosynthesis. Its function is as follows. Cell wall formation. Catalyzes the transfer of a GlcNAc subunit on undecaprenyl-pyrophosphoryl-MurNAc-pentapeptide (lipid intermediate I) to form undecaprenyl-pyrophosphoryl-MurNAc-(pentapeptide)GlcNAc (lipid intermediate II). The sequence is that of UDP-N-acetylglucosamine--N-acetylmuramyl-(pentapeptide) pyrophosphoryl-undecaprenol N-acetylglucosamine transferase from Alkalilimnicola ehrlichii (strain ATCC BAA-1101 / DSM 17681 / MLHE-1).